The sequence spans 60 residues: Large ribosomal subunit protein bL32 (60 aa).

Over residues 1–16 the composition is skewed to basic residues; it reads MAVPRRKTSPSRRGMR. Positions 1–60 are disordered; it reads MAVPRRKTSPSRRGMRRSADAIKKPTYVEDKDSGELRRPHHLDLKTGMYKGRQVLKKKDA. The span at 17 to 44 shows a compositional bias: basic and acidic residues; it reads RSADAIKKPTYVEDKDSGELRRPHHLDL.

It belongs to the bacterial ribosomal protein bL32 family.

This chain is Large ribosomal subunit protein bL32, found in Bradyrhizobium sp. (strain BTAi1 / ATCC BAA-1182).